A 271-amino-acid chain; its full sequence is Mannosyl-3-phosphoglycerate phosphatase (271 aa).

D13 acts as the Nucleophile in catalysis. 3 residues coordinate Mg(2+): D13, D15, and D214.

It belongs to the HAD-like hydrolase superfamily. MPGP family. It depends on Mg(2+) as a cofactor.

It localises to the cytoplasm. It catalyses the reaction 2-O-(alpha-D-mannosyl)-3-phosphoglycerate + H2O = (2R)-2-O-(alpha-D-mannosyl)-glycerate + phosphate. The protein is Mannosyl-3-phosphoglycerate phosphatase of Escherichia coli O139:H28 (strain E24377A / ETEC).